A 188-amino-acid chain; its full sequence is Photosystem I assembly protein Ycf4 (188 aa).

The next 2 helical transmembrane spans lie at 26-48 and 63-85; these read FFWA…SSYF and FIPQ…GYLW.

It belongs to the Ycf4 family.

It is found in the cellular thylakoid membrane. Its function is as follows. Seems to be required for the assembly of the photosystem I complex. This is Photosystem I assembly protein Ycf4 from Synechocystis sp. (strain ATCC 27184 / PCC 6803 / Kazusa).